The primary structure comprises 383 residues: uncharacterized protein (383 aa).

A helical transmembrane segment spans residues 6–26; that stretch reads LFLFSCLYFIGGNLKALVLGI. Positions 131–303 constitute an ATP-grasp domain; the sequence is YKKLKNLGFN…LAMVLLNNKY (173 aa).

It localises to the membrane. This is an uncharacterized protein from Methanocaldococcus jannaschii (strain ATCC 43067 / DSM 2661 / JAL-1 / JCM 10045 / NBRC 100440) (Methanococcus jannaschii).